The sequence spans 484 residues: L-amino-acid oxidase (484 aa).

A disulfide bridge connects residues Cys8 and Cys171. Residues 41-42 (MS), 61-62 (EA), and Arg69 each bind FAD. His73 lines the Zn(2+) pocket. 85–88 (GPMR) contacts FAD. A substrate-binding site is contributed by Arg88. N-linked (GlcNAc...) asparagine glycosylation is present at Asn170. His221 serves as a coordination point for substrate. Position 259 (Val259) interacts with FAD. Glu277 is a binding site for Zn(2+). Cysteines 329 and 410 form a disulfide. Residue Tyr370 coordinates substrate. Residues Glu455 and 462–467 (GWIDST) each bind FAD. 462 to 463 (GW) contributes to the substrate binding site.

This sequence belongs to the flavin monoamine oxidase family. FIG1 subfamily. In terms of assembly, homodimer; non-covalently linked. FAD is required as a cofactor. As to expression, expressed by the venom gland.

Its subcellular location is the secreted. It catalyses the reaction an L-alpha-amino acid + O2 + H2O = a 2-oxocarboxylate + H2O2 + NH4(+). Catalyzes an oxidative deamination of predominantly hydrophobic and aromatic L-amino acids, thus producing hydrogen peroxide that may contribute to the diverse toxic effects of this enzyme. Exhibits diverse biological activities, such as hemorrhage, hemolysis, edema, apoptosis of vascular endothelial cells or tumor cell lines, antibacterial and antiparasitic activities, as well as regulation of platelet aggregation. Effects of snake L-amino oxidases on platelets are controversial, since they either induce aggregation or inhibit agonist-induced aggregation. These different effects are probably due to different experimental conditions. In Vipera ammodytes ammodytes (Western sand viper), this protein is L-amino-acid oxidase.